The chain runs to 195 residues: Large ribosomal subunit protein bL17 (195 aa).

A disordered region spans residues 125–195; that stretch reads ANRARRVGAS…PTQDSDADKS (71 aa). The segment covering 136–152 has biased composition (low complexity); that stretch reads QTAPVAAAAAPQAAVEP. 2 stretches are compositionally biased toward acidic residues: residues 153-173 and 183-195; these read EATE…EDTT and TDDP…ADKS.

It belongs to the bacterial ribosomal protein bL17 family. Part of the 50S ribosomal subunit. Contacts protein L32.

This is Large ribosomal subunit protein bL17 from Mycobacterium sp. (strain JLS).